We begin with the raw amino-acid sequence, 38 residues long: Photosystem II reaction center protein L (38 aa).

A helical membrane pass occupies residues 17–37 (SLYWGLLLIFVLAVLFSNYFF).

It belongs to the PsbL family. In terms of assembly, PSII is composed of 1 copy each of membrane proteins PsbA, PsbB, PsbC, PsbD, PsbE, PsbF, PsbH, PsbI, PsbJ, PsbK, PsbL, PsbM, PsbT, PsbX, PsbY, PsbZ, Psb30/Ycf12, at least 3 peripheral proteins of the oxygen-evolving complex and a large number of cofactors. It forms dimeric complexes.

The protein localises to the plastid. It is found in the chloroplast thylakoid membrane. Functionally, one of the components of the core complex of photosystem II (PSII). PSII is a light-driven water:plastoquinone oxidoreductase that uses light energy to abstract electrons from H(2)O, generating O(2) and a proton gradient subsequently used for ATP formation. It consists of a core antenna complex that captures photons, and an electron transfer chain that converts photonic excitation into a charge separation. This subunit is found at the monomer-monomer interface and is required for correct PSII assembly and/or dimerization. This chain is Photosystem II reaction center protein L, found in Psilotum nudum (Whisk fern).